The primary structure comprises 426 residues: Protein TolB homolog (426 aa).

An N-terminal signal peptide occupies residues 1-19; sequence MFLRSFLCLLCLLPSILYC.

This sequence belongs to the TolB family.

Its subcellular location is the periplasm. This is Protein TolB homolog from Chlamydia muridarum (strain MoPn / Nigg).